The sequence spans 270 residues: Chlorophyll a-b binding protein, chloroplastic (270 aa).

The N-terminal 41 residues, 1–41, are a transit peptide targeting the chloroplast; it reads MASACASSTIAAVAFSSPSSQKNGSIVGATKASFLGGKRLR. A chlorophyll b-binding site is contributed by W68. Residues F88, E107, and H110 each contribute to the chlorophyll a site. R112 lines the chlorophyll b pocket. A helical membrane pass occupies residues 113 to 133; that stretch reads WAMLGAAGIFIPEFLTKIGVL. Residue Q144 participates in chlorophyll a binding. Residues 146-166 traverse the membrane as a helical segment; the sequence is YFTDTTTLFVIELVLIGWAEG. Residues V155, E165, and R168 each coordinate chlorophyll b. Residues K221, E222, N225, R227, Q239, and H254 each coordinate chlorophyll a. Residues 228–248 form a helical membrane-spanning segment; it reads LAMLAVMGAWFQHIYTGTGPI.

Belongs to the light-harvesting chlorophyll a/b-binding (LHC) protein family. As to quaternary structure, the LHC complex consists of chlorophyll a-b binding proteins. The cofactor is Binds at least 14 chlorophylls (8 Chl-a and 6 Chl-b) and carotenoids such as lutein and neoxanthin.. Post-translationally, photoregulated by reversible phosphorylation of its threonine residues.

It localises to the plastid. The protein resides in the chloroplast thylakoid membrane. Its function is as follows. The light-harvesting complex (LHC) functions as a light receptor, it captures and delivers excitation energy to photosystems with which it is closely associated. In Petunia hybrida (Petunia), this protein is Chlorophyll a-b binding protein, chloroplastic.